Here is a 602-residue protein sequence, read N- to C-terminus: Threonine--tRNA ligase (602 aa).

The interval 208–499 (DHRKLGTELK…LTEHCAGEFP (292 aa)) is catalytic. 3 residues coordinate Zn(2+): Cys-300, His-351, and His-476.

This sequence belongs to the class-II aminoacyl-tRNA synthetase family. As to quaternary structure, homodimer. The cofactor is Zn(2+).

The protein localises to the cytoplasm. The catalysed reaction is tRNA(Thr) + L-threonine + ATP = L-threonyl-tRNA(Thr) + AMP + diphosphate + H(+). In terms of biological role, catalyzes the attachment of threonine to tRNA(Thr) in a two-step reaction: L-threonine is first activated by ATP to form Thr-AMP and then transferred to the acceptor end of tRNA(Thr). Also edits incorrectly charged L-seryl-tRNA(Thr). In Campylobacter jejuni subsp. jejuni serotype O:23/36 (strain 81-176), this protein is Threonine--tRNA ligase.